The chain runs to 154 residues: Crossover junction endodeoxyribonuclease RuvC (154 aa).

Catalysis depends on residues Asp7, Glu66, and Asp139. Residues Asp7, Glu66, and Asp139 each contribute to the Mg(2+) site.

It belongs to the RuvC family. Homodimer which binds Holliday junction (HJ) DNA. The HJ becomes 2-fold symmetrical on binding to RuvC with unstacked arms; it has a different conformation from HJ DNA in complex with RuvA. In the full resolvosome a probable DNA-RuvA(4)-RuvB(12)-RuvC(2) complex forms which resolves the HJ. Mg(2+) serves as cofactor.

It localises to the cytoplasm. The enzyme catalyses Endonucleolytic cleavage at a junction such as a reciprocal single-stranded crossover between two homologous DNA duplexes (Holliday junction).. In terms of biological role, the RuvA-RuvB-RuvC complex processes Holliday junction (HJ) DNA during genetic recombination and DNA repair. Endonuclease that resolves HJ intermediates. Cleaves cruciform DNA by making single-stranded nicks across the HJ at symmetrical positions within the homologous arms, yielding a 5'-phosphate and a 3'-hydroxyl group; requires a central core of homology in the junction. The consensus cleavage sequence is 5'-(A/T)TT(C/G)-3'. Cleavage occurs on the 3'-side of the TT dinucleotide at the point of strand exchange. HJ branch migration catalyzed by RuvA-RuvB allows RuvC to scan DNA until it finds its consensus sequence, where it cleaves and resolves the cruciform DNA. This chain is Crossover junction endodeoxyribonuclease RuvC, found in Aliarcobacter butzleri (strain RM4018) (Arcobacter butzleri).